The chain runs to 369 residues: 3-dehydroquinate synthase (369 aa).

NAD(+) is bound by residues Asp78–Lys83, Gly112–Asp116, Thr136–Thr137, Lys149, Lys158, and Thr176–Thr179. Residues Glu191, His254, and His271 each coordinate Zn(2+).

It belongs to the sugar phosphate cyclases superfamily. Dehydroquinate synthase family. NAD(+) is required as a cofactor. Requires Co(2+) as cofactor. It depends on Zn(2+) as a cofactor.

The protein localises to the cytoplasm. The catalysed reaction is 7-phospho-2-dehydro-3-deoxy-D-arabino-heptonate = 3-dehydroquinate + phosphate. Its pathway is metabolic intermediate biosynthesis; chorismate biosynthesis; chorismate from D-erythrose 4-phosphate and phosphoenolpyruvate: step 2/7. Functionally, catalyzes the conversion of 3-deoxy-D-arabino-heptulosonate 7-phosphate (DAHP) to dehydroquinate (DHQ). This chain is 3-dehydroquinate synthase, found in Nitrosomonas europaea (strain ATCC 19718 / CIP 103999 / KCTC 2705 / NBRC 14298).